Reading from the N-terminus, the 166-residue chain is Small ribosomal subunit protein uS5 (166 aa).

The 64-residue stretch at 11 to 74 folds into the S5 DRBM domain; that stretch reads LQEKLIAVNR…EKARRNMMNV (64 aa).

Belongs to the universal ribosomal protein uS5 family. In terms of assembly, part of the 30S ribosomal subunit. Contacts proteins S4 and S8.

In terms of biological role, with S4 and S12 plays an important role in translational accuracy. Located at the back of the 30S subunit body where it stabilizes the conformation of the head with respect to the body. The protein is Small ribosomal subunit protein uS5 of Sodalis glossinidius (strain morsitans).